The primary structure comprises 381 residues: Tumor necrosis factor receptor superfamily member 10B (381 aa).

Residues 1–52 form the signal peptide; sequence MEPPGPSTPTASAAARADHYTPGLRPLPKRRLLYSFALLLAVLQAVFVPVTA. 3 TNFR-Cys repeats span residues 26–86, 87–129, and 130–169; these read PLPK…GNCK, PCRE…NTVC, and RCKP…NRKC. Residues 53–180 lie on the Extracellular side of the membrane; it reads NPAHNRPAGL…SKTAWASWHK (128 aa). Disulfide bonds link Cys74–Cys85, Cys88–Cys105, Cys108–Cys121, Cys111–Cys129, Cys131–Cys145, Cys148–Cys161, and Cys151–Cys169. The chain crosses the membrane as a helical span at residues 181-201; that stretch reads LGLWIGLLVPVVLLIGALLVW. Topologically, residues 202–381 are cytoplasmic; it reads KTGAWRQWLL…ETGPGGSQCV (180 aa). Residues 228–260 are disordered; it reads HSSLLDRQTSSTTNDSNHNTEPGKTQKTGKKLL. A compositionally biased stretch (low complexity) spans 236-247; that stretch reads TSSTTNDSNHNT. The region spanning 273–356 is the Death domain; it reads KFIFEYCSDI…DAMEKIEDYA (84 aa). A glycan ((Microbial infection) N-beta-linked (GlcNAc) arginine) is linked at Arg293.

Monomer. Can interact with TRADD and RIPK1. Three TNFRSF10B molecules interact with the TNFSF10 homotrimer. In the absence of stimulation, interacts with BIRC2, DDX3X and GSK3B. The interaction with BIRC2 and DDX3X is further enhanced upon receptor stimulation and accompanied by DDX3X and BIRC2 cleavage. In terms of processing, (Microbial infection) Glycosylated at Arg-293 by S.typhimurium protein Ssek3. Highly expressed in heart, lung and kidney.

It localises to the membrane. Its function is as follows. Receptor for the cytotoxic ligand TNFSF10/TRAIL. The adapter molecule FADD recruits caspase-8 to the activated receptor. The resulting death-inducing signaling complex (DISC) performs caspase-8 proteolytic activation which initiates the subsequent cascade of caspases (aspartate-specific cysteine proteases) mediating apoptosis. Promotes the activation of NF-kappa-B. Essential for ER stress-induced apoptosis. The protein is Tumor necrosis factor receptor superfamily member 10B (Tnfrsf10b) of Mus musculus (Mouse).